Here is a 164-residue protein sequence, read N- to C-terminus: Cytochrome c-type biogenesis protein CcmE (164 aa).

Over 1-8 (MNPRRKQR) the chain is Cytoplasmic. A helical; Signal-anchor for type II membrane protein membrane pass occupies residues 9 to 29 (LAVVGIIGFLIVSAVGLMLYA). Residues 30-164 (LNDSIDLFYT…YESSNGAGSK (135 aa)) lie on the Periplasmic side of the membrane. Residues His-128 and Tyr-132 each coordinate heme. The tract at residues 142-164 (KGIKHVKPENMPTYESSNGAGSK) is disordered. A compositionally biased stretch (polar residues) spans 154–164 (TYESSNGAGSK).

Belongs to the CcmE/CycJ family.

It is found in the cell inner membrane. Heme chaperone required for the biogenesis of c-type cytochromes. Transiently binds heme delivered by CcmC and transfers the heme to apo-cytochromes in a process facilitated by CcmF and CcmH. In Alteromonas mediterranea (strain DSM 17117 / CIP 110805 / LMG 28347 / Deep ecotype), this protein is Cytochrome c-type biogenesis protein CcmE.